Reading from the N-terminus, the 165-residue chain is GTPase activating protein 1 (165 aa).

The region spanning 1–105 is the C2 domain; sequence MLGHLVGLVK…VVKMKIEGVA (105 aa). Residues R22, D23, D28, D74, K75, D76, and D81 each contribute to the Ca(2+) site.

Belongs to the plant CAR protein family. Binds to PYR/PYL/RCAR abscisic acid intracellular receptors in an ABA-independent manner, both at the plasma membrane and in the nucleus. Binds phospholipids in a Ca(2+)-dependent manner. Interacts with YchF1.

The protein resides in the cell membrane. Its subcellular location is the nucleus. It localises to the cytoplasm. The protein localises to the cytosol. In terms of biological role, mediates the transient calcium-dependent interaction of PYR/PYL/RCAR abscisic acid (ABA) receptors with the plasma membrane and thus regulates ABA sensitivity. Stimulates the GTPase/ATPase activities of YchF1, and regulates its subcellular localization. Promotes tolerance towards salinity stress by limiting the accumulation of reactive oxygen species (ROS). Promotes resistance to bacterial pathogens. This Oryza sativa subsp. indica (Rice) protein is GTPase activating protein 1.